A 130-amino-acid chain; its full sequence is Large ribosomal subunit protein bL17 (130 aa).

Belongs to the bacterial ribosomal protein bL17 family. In terms of assembly, part of the 50S ribosomal subunit. Contacts protein L32.

The polypeptide is Large ribosomal subunit protein bL17 (Nitrosomonas eutropha (strain DSM 101675 / C91 / Nm57)).